We begin with the raw amino-acid sequence, 141 residues long: ATP synthase epsilon chain (141 aa).

This sequence belongs to the ATPase epsilon chain family. F-type ATPases have 2 components, CF(1) - the catalytic core - and CF(0) - the membrane proton channel. CF(1) has five subunits: alpha(3), beta(3), gamma(1), delta(1), epsilon(1). CF(0) has three main subunits: a, b and c.

It localises to the cell inner membrane. In terms of biological role, produces ATP from ADP in the presence of a proton gradient across the membrane. This Methylobacillus flagellatus (strain ATCC 51484 / DSM 6875 / VKM B-1610 / KT) protein is ATP synthase epsilon chain.